Consider the following 201-residue polypeptide: Recombination protein RecR (201 aa).

Residues 59–74 form a C4-type zinc finger; it reads CEICGNMDTENMCRIC. The Toprim domain occupies 82–177; the sequence is SIIAIVETVA…KISRLASGIP (96 aa).

It belongs to the RecR family.

In terms of biological role, may play a role in DNA repair. It seems to be involved in an RecBC-independent recombinational process of DNA repair. It may act with RecF and RecO. In Rickettsia conorii (strain ATCC VR-613 / Malish 7), this protein is Recombination protein RecR.